The sequence spans 35 residues: uncharacterized protein (35 aa).

This is an uncharacterized protein from Escherichia coli (Bacteriophage T3).